We begin with the raw amino-acid sequence, 256 residues long: Trans-aconitate 2-methyltransferase (256 aa).

Belongs to the methyltransferase superfamily. Tam family.

It is found in the cytoplasm. The enzyme catalyses trans-aconitate + S-adenosyl-L-methionine = (E)-3-(methoxycarbonyl)pent-2-enedioate + S-adenosyl-L-homocysteine. Functionally, catalyzes the S-adenosylmethionine monomethyl esterification of trans-aconitate. The chain is Trans-aconitate 2-methyltransferase from Rhodopseudomonas palustris (strain HaA2).